The sequence spans 355 residues: (3aS,4S,5R,7aS)-5-hydroxy-7a-methyl-1-oxo-octahydro-1H-indene-4-carboxyl-CoA dehydrogenase (355 aa).

Residues 21 to 23, 173 to 175, and 196 to 197 each bind FMN; these read GMG, AGG, and GT.

The protein belongs to the nitronate monooxygenase family.

It catalyses the reaction (3aS,4S,5R,7aS)-5-hydroxy-7a-methyl-1-oxo-octahydro-1H-indene-4-carboxyl-CoA + NAD(+) = (5R,7aS)-5-hydroxy-7a-methyl-1-oxo-2,3,5,6,7,7a-hexahydro-1H-indene-carboxyl-CoA + NADH + H(+). It functions in the pathway steroid metabolism; cholesterol degradation. Requires the presence of IpdF. Functionally, involved in the final steps of cholesterol and steroid degradation. Probably catalyzes the introduction of a double bound into the C ring of 5OH-HIC-CoA, leading to the formation of (5R,7aS)-5-hydroxy-7a-methyl-1-oxo-3,5,6,7-tetrahydro-2H-indene-4-carboxyl-CoA. The polypeptide is (3aS,4S,5R,7aS)-5-hydroxy-7a-methyl-1-oxo-octahydro-1H-indene-4-carboxyl-CoA dehydrogenase (Mycobacterium tuberculosis (strain ATCC 25618 / H37Rv)).